We begin with the raw amino-acid sequence, 345 residues long: Serine/arginine-rich splicing factor 6 (345 aa).

In terms of domain architecture, RRM 1 spans 1–72 (MPRVYIGRLS…ERVIVEHARG (72 aa)). A phosphoserine mark is found at S45, S81, and S84. Positions 75–102 (RDRDGYSYGSRSGGGGYSSRRTSGRDKY) are disordered. An RRM 2 domain is found at 110-183 (FRLIVENLSS…RNIRLIEDKP (74 aa)). K165 carries the N6-acetyllysine modification. The tract at residues 176-345 (IRLIEDKPRT…RSRSRSSSRD (170 aa)) is disordered. Residue K182 forms a Glycyl lysine isopeptide (Lys-Gly) (interchain with G-Cter in SUMO2) linkage. A compositionally biased stretch (basic residues) spans 185-250 (TSHRRSYSGS…RKSRSKSKSK (66 aa)). Composition is skewed to basic and acidic residues over residues 264–273 (RSKDEYEKSR) and 282–293 (SPKENGKGDIKS). 2 positions are modified to phosphoserine: S299 and S301. The residue at position 305 (S305) is a Phosphoserine; by DYRK1A. S316 and S318 each carry phosphoserine. Positions 323–345 (RASRSHSRSRSKSRSRSRSSSRD) are enriched in basic residues.

It belongs to the splicing factor SR family. In terms of assembly, binds SREK1/SFRS12. Interacts with DYRK1A. Extensively phosphorylated on serine residues in the RS domain. Phosphorylated by DYRK1A, probably in the RS domain. Phosphorylation by DYRK1A modulates alternative splice site selection and inhibits the expression of MAPT/Tau exon 10.

It is found in the nucleus. The protein resides in the nucleus speckle. In terms of biological role, plays a role in constitutive splicing and modulates the selection of alternative splice sites. Plays a role in the alternative splicing of MAPT/Tau exon 10. Binds to alternative exons of TNC pre-mRNA and promotes the expression of alternatively spliced TNC. Plays a role in wound healing and in the regulation of keratinocyte differentiation and proliferation via its role in alternative splicing. The sequence is that of Serine/arginine-rich splicing factor 6 (SRSF6) from Bos taurus (Bovine).